A 283-amino-acid chain; its full sequence is Probable replication-associated protein repA1 (283 aa).

This sequence belongs to the IncFII RepA family.

Its function is as follows. This protein is essential for plasmid replication; it is involved in copy control functions. This is Probable replication-associated protein repA1 (repA1) from Buchnera aphidicola subsp. Acyrthosiphon pisum (strain APS) (Acyrthosiphon pisum symbiotic bacterium).